The following is a 429-amino-acid chain: Glutamate-1-semialdehyde 2,1-aminomutase 2 (429 aa).

Lys268 carries the N6-(pyridoxal phosphate)lysine modification.

It belongs to the class-III pyridoxal-phosphate-dependent aminotransferase family. HemL subfamily. Homodimer. It depends on pyridoxal 5'-phosphate as a cofactor.

The protein localises to the cytoplasm. It carries out the reaction (S)-4-amino-5-oxopentanoate = 5-aminolevulinate. It functions in the pathway porphyrin-containing compound metabolism; protoporphyrin-IX biosynthesis; 5-aminolevulinate from L-glutamyl-tRNA(Glu): step 2/2. The polypeptide is Glutamate-1-semialdehyde 2,1-aminomutase 2 (Staphylococcus aureus (strain MRSA252)).